Here is a 90-residue protein sequence, read N- to C-terminus: Translation initiation factor IF-1 (90 aa).

The S1-like domain maps to 15-90 (KKQKRKKEEV…TLGRIVFRHK (76 aa)).

The protein belongs to the IF-1 family. Component of the 30S ribosomal translation pre-initiation complex which assembles on the 30S ribosome in the order IF-2 and IF-3, IF-1 and N-formylmethionyl-tRNA(fMet); mRNA recruitment can occur at any time during PIC assembly.

It is found in the cytoplasm. Functionally, one of the essential components for the initiation of protein synthesis. Stabilizes the binding of IF-2 and IF-3 on the 30S subunit to which N-formylmethionyl-tRNA(fMet) subsequently binds. Helps modulate mRNA selection, yielding the 30S pre-initiation complex (PIC). Upon addition of the 50S ribosomal subunit IF-1, IF-2 and IF-3 are released leaving the mature 70S translation initiation complex. The protein is Translation initiation factor IF-1 of Mycoplasma sp.